Consider the following 221-residue polypeptide: Adenylate kinase (221 aa).

10–15 (GAGKGT) is a binding site for ATP. An NMP region spans residues 30 to 59 (STGDMLRAAVKAGTEFGVAAKKIMDAGGLV). Residues T31, R36, 57-59 (GLV), 85-88 (GFPR), and Q92 each bind AMP. Positions 122-159 (GRRVHPASGRTYHIKYNPPKVEGKDDVTGDALIQRDDD) are LID. Residues R123 and 132–133 (TY) contribute to the ATP site. AMP is bound by residues R156 and R167. Residue G207 coordinates ATP.

Belongs to the adenylate kinase family. As to quaternary structure, monomer.

The protein localises to the cytoplasm. The enzyme catalyses AMP + ATP = 2 ADP. It participates in purine metabolism; AMP biosynthesis via salvage pathway; AMP from ADP: step 1/1. Its function is as follows. Catalyzes the reversible transfer of the terminal phosphate group between ATP and AMP. Plays an important role in cellular energy homeostasis and in adenine nucleotide metabolism. In Polynucleobacter asymbioticus (strain DSM 18221 / CIP 109841 / QLW-P1DMWA-1) (Polynucleobacter necessarius subsp. asymbioticus), this protein is Adenylate kinase.